We begin with the raw amino-acid sequence, 340 residues long: Diacylglycerol acyltransferase/mycolyltransferase Ag85C (340 aa).

A signal peptide spans 1-45 (MTFFEQVRRLRSAATTLPRRLAIAAMGAVLVYGLVGTFGGPATAG). Residue 86-87 (LR) coordinates substrate. Residues 102–112 (FEEYYQSGLSV) are fibronectin-binding. Substrate is bound by residues serine 170 and asparagine 198. Serine 170 acts as the Nucleophile in catalysis. Glutamate 274 is a catalytic residue. Substrate-binding positions include 276-279 (LTLR) and 306-308 (HSW). The active site involves histidine 306.

The protein belongs to the mycobacterial A85 antigen family. Homodimer.

Its subcellular location is the secreted. The catalysed reaction is an acyl-CoA + a 1,2-diacyl-sn-glycerol = a triacyl-sn-glycerol + CoA. It catalyses the reaction 2 alpha,alpha'-trehalose 6-mycolate = alpha,alpha'-trehalose 6,6'-bismycolate + alpha,alpha-trehalose. The antigen 85 proteins (FbpA, FbpB, FbpC) are responsible for the high affinity of mycobacteria to fibronectin, a large adhesive glycoprotein, which facilitates the attachment of M.tuberculosis to murine alveolar macrophages (AMs). They also help to maintain the integrity of the cell wall by catalyzing the transfer of mycolic acids to cell wall arabinogalactan and through the synthesis of alpha,alpha-trehalose dimycolate (TDM, cord factor). They catalyze the transfer of a mycoloyl residue from one molecule of alpha,alpha-trehalose monomycolate (TMM) to another TMM, leading to the formation of TDM. This Mycobacterium bovis (strain ATCC BAA-935 / AF2122/97) protein is Diacylglycerol acyltransferase/mycolyltransferase Ag85C (fbpC).